The following is a 251-amino-acid chain: uncharacterized protein (251 aa).

One can recognise an N-acetyltransferase domain in the interval 4-152; that stretch reads IEITKDNIED…YFQLMALTWN (149 aa).

The protein belongs to the acetyltransferase family.

This is an uncharacterized protein from Bacillus subtilis (strain 168).